We begin with the raw amino-acid sequence, 431 residues long: Glutamyl-tRNA reductase (431 aa).

Substrate-binding positions include 49–52 (TCDR), Ser-109, 114–116 (EPH), and Gln-120. Cys-50 functions as the Nucleophile in the catalytic mechanism. 189 to 194 (GTQEMG) contacts NADP(+).

Belongs to the glutamyl-tRNA reductase family. In terms of assembly, homodimer.

It catalyses the reaction (S)-4-amino-5-oxopentanoate + tRNA(Glu) + NADP(+) = L-glutamyl-tRNA(Glu) + NADPH + H(+). Its pathway is porphyrin-containing compound metabolism; protoporphyrin-IX biosynthesis; 5-aminolevulinate from L-glutamyl-tRNA(Glu): step 1/2. The protein operates within porphyrin-containing compound metabolism; chlorophyll biosynthesis. Functionally, catalyzes the NADPH-dependent reduction of glutamyl-tRNA(Glu) to glutamate 1-semialdehyde (GSA). In Rhodospirillum rubrum (strain ATCC 11170 / ATH 1.1.1 / DSM 467 / LMG 4362 / NCIMB 8255 / S1), this protein is Glutamyl-tRNA reductase.